We begin with the raw amino-acid sequence, 293 residues long: Acetyl-coenzyme A carboxylase carboxyl transferase subunit beta (293 aa).

Positions 29–293 constitute a CoA carboxyltransferase N-terminal domain; that stretch reads LWVKCSECSQ…GVNELVEANI (265 aa). Positions 33, 36, 52, and 55 each coordinate Zn(2+). The segment at 33-55 adopts a C4-type zinc-finger fold; it reads CSECSQVAYRKDLISNFNVCSNC.

Belongs to the AccD/PCCB family. In terms of assembly, acetyl-CoA carboxylase is a heterohexamer composed of biotin carboxyl carrier protein (AccB), biotin carboxylase (AccC) and two subunits each of ACCase subunit alpha (AccA) and ACCase subunit beta (AccD). The cofactor is Zn(2+).

Its subcellular location is the cytoplasm. The enzyme catalyses N(6)-carboxybiotinyl-L-lysyl-[protein] + acetyl-CoA = N(6)-biotinyl-L-lysyl-[protein] + malonyl-CoA. It participates in lipid metabolism; malonyl-CoA biosynthesis; malonyl-CoA from acetyl-CoA: step 1/1. In terms of biological role, component of the acetyl coenzyme A carboxylase (ACC) complex. Biotin carboxylase (BC) catalyzes the carboxylation of biotin on its carrier protein (BCCP) and then the CO(2) group is transferred by the transcarboxylase to acetyl-CoA to form malonyl-CoA. The sequence is that of Acetyl-coenzyme A carboxylase carboxyl transferase subunit beta from Prochlorococcus marinus (strain MIT 9215).